The primary structure comprises 65 residues: Large ribosomal subunit protein bL35 (65 aa).

The disordered stretch occupies residues 1 to 65; the sequence is MPKIKTNRAA…GRLDRMLPYL (65 aa). Over residues 10 to 44 the composition is skewed to basic residues; it reads AAKRFRKTASGKYKAGHANRSHILTKKATKRKRNL. The span at 50–65 shows a compositional bias: basic and acidic residues; the sequence is VRAEDAGRLDRMLPYL.

This sequence belongs to the bacterial ribosomal protein bL35 family.

The protein is Large ribosomal subunit protein bL35 of Xylella fastidiosa (strain M23).